The chain runs to 118 residues: Small ribosomal subunit protein uS13 (118 aa).

Positions 94 to 118 (SLPLRGQRTKTNARTRKGPRKPIRK) are disordered.

Belongs to the universal ribosomal protein uS13 family. In terms of assembly, part of the 30S ribosomal subunit. Forms a loose heterodimer with protein S19. Forms two bridges to the 50S subunit in the 70S ribosome.

Located at the top of the head of the 30S subunit, it contacts several helices of the 16S rRNA. In the 70S ribosome it contacts the 23S rRNA (bridge B1a) and protein L5 of the 50S subunit (bridge B1b), connecting the 2 subunits; these bridges are implicated in subunit movement. Contacts the tRNAs in the A and P-sites. In Shewanella sp. (strain W3-18-1), this protein is Small ribosomal subunit protein uS13.